The primary structure comprises 723 residues: Probable inactive serine/threonine-protein kinase fnkD (723 aa).

Positions 33 to 276 constitute a Protein kinase domain; it reads WEIITQLESN…TTSLPKYSTL (244 aa). FNIP repeat units follow at residues 301–342, 343–384, 385–426, 524–565, 566–606, and 647–690; these read FNQP…ELAS, FNQT…LLSS, FNQP…SLAS, FNQS…ILPS, FNHP…LGDE, and FNIE…FGIT.

It belongs to the protein kinase superfamily. STE Ser/Thr protein kinase family.

In Dictyostelium discoideum (Social amoeba), this protein is Probable inactive serine/threonine-protein kinase fnkD (fnkD-1).